The sequence spans 61 residues: Small ribosomal subunit protein uS14 (61 aa).

Residues cysteine 24, cysteine 27, cysteine 40, and cysteine 43 each coordinate Zn(2+).

This sequence belongs to the universal ribosomal protein uS14 family. Zinc-binding uS14 subfamily. As to quaternary structure, part of the 30S ribosomal subunit. Contacts proteins S3 and S10. The cofactor is Zn(2+).

In terms of biological role, binds 16S rRNA, required for the assembly of 30S particles and may also be responsible for determining the conformation of the 16S rRNA at the A site. In Clostridium botulinum (strain Alaska E43 / Type E3), this protein is Small ribosomal subunit protein uS14.